A 54-amino-acid chain; its full sequence is MAATDVRPKITLACEECKHRNYITNKNRRNDPDRLAMKKFCPNCGTHRVHKETR.

This sequence belongs to the bacterial ribosomal protein bL33 family.

This chain is Large ribosomal subunit protein bL33B, found in Saccharopolyspora erythraea (strain ATCC 11635 / DSM 40517 / JCM 4748 / NBRC 13426 / NCIMB 8594 / NRRL 2338).